We begin with the raw amino-acid sequence, 275 residues long: Diaminopimelate epimerase (275 aa).

Residues N13, Q46, and N65 each contribute to the substrate site. C74 (proton donor) is an active-site residue. Substrate-binding positions include 75–76 (GN), N158, N191, and 209–210 (ER). Catalysis depends on C218, which acts as the Proton acceptor. 219–220 (GT) is a binding site for substrate.

It belongs to the diaminopimelate epimerase family. In terms of assembly, homodimer.

It localises to the cytoplasm. It carries out the reaction (2S,6S)-2,6-diaminopimelate = meso-2,6-diaminopimelate. The protein operates within amino-acid biosynthesis; L-lysine biosynthesis via DAP pathway; DL-2,6-diaminopimelate from LL-2,6-diaminopimelate: step 1/1. Its function is as follows. Catalyzes the stereoinversion of LL-2,6-diaminopimelate (L,L-DAP) to meso-diaminopimelate (meso-DAP), a precursor of L-lysine and an essential component of the bacterial peptidoglycan. This is Diaminopimelate epimerase from Nitrosomonas europaea (strain ATCC 19718 / CIP 103999 / KCTC 2705 / NBRC 14298).